Consider the following 88-residue polypeptide: Small ribosomal subunit protein bS16 (88 aa).

Belongs to the bacterial ribosomal protein bS16 family.

The chain is Small ribosomal subunit protein bS16 from Geobacter metallireducens (strain ATCC 53774 / DSM 7210 / GS-15).